Here is a 347-residue protein sequence, read N- to C-terminus: Quinolinate synthase (347 aa).

The iminosuccinate site is built by His-47 and Ser-68. Cys-113 provides a ligand contact to [4Fe-4S] cluster. Residues 139–141 and Ser-156 contribute to the iminosuccinate site; that span reads YAN. Position 200 (Cys-200) interacts with [4Fe-4S] cluster. Residues 226 to 228 and Thr-243 contribute to the iminosuccinate site; that span reads HPE. A [4Fe-4S] cluster-binding site is contributed by Cys-297.

Belongs to the quinolinate synthase family. Type 1 subfamily. The cofactor is [4Fe-4S] cluster.

Its subcellular location is the cytoplasm. It catalyses the reaction iminosuccinate + dihydroxyacetone phosphate = quinolinate + phosphate + 2 H2O + H(+). The protein operates within cofactor biosynthesis; NAD(+) biosynthesis; quinolinate from iminoaspartate: step 1/1. In terms of biological role, catalyzes the condensation of iminoaspartate with dihydroxyacetone phosphate to form quinolinate. The sequence is that of Quinolinate synthase from Salmonella agona (strain SL483).